The sequence spans 93 residues: NAD(P)H-quinone oxidoreductase subunit 4L, chloroplastic (93 aa).

2 helical membrane-spanning segments follow: residues 1 to 21 and 60 to 80; these read MLEH…SGLI and IFAI…LSIA.

The protein belongs to the complex I subunit 4L family. As to quaternary structure, NDH is composed of at least 16 different subunits, 5 of which are encoded in the nucleus.

The protein resides in the plastid. It is found in the chloroplast thylakoid membrane. It catalyses the reaction a plastoquinone + NADH + (n+1) H(+)(in) = a plastoquinol + NAD(+) + n H(+)(out). The catalysed reaction is a plastoquinone + NADPH + (n+1) H(+)(in) = a plastoquinol + NADP(+) + n H(+)(out). NDH shuttles electrons from NAD(P)H:plastoquinone, via FMN and iron-sulfur (Fe-S) centers, to quinones in the photosynthetic chain and possibly in a chloroplast respiratory chain. The immediate electron acceptor for the enzyme in this species is believed to be plastoquinone. Couples the redox reaction to proton translocation, and thus conserves the redox energy in a proton gradient. This chain is NAD(P)H-quinone oxidoreductase subunit 4L, chloroplastic, found in Anthoceros angustus (Hornwort).